A 366-amino-acid chain; its full sequence is Peptide chain release factor 2 (366 aa).

Residue glutamine 251 is modified to N5-methylglutamine.

The protein belongs to the prokaryotic/mitochondrial release factor family. Methylated by PrmC. Methylation increases the termination efficiency of RF2.

The protein localises to the cytoplasm. Its function is as follows. Peptide chain release factor 2 directs the termination of translation in response to the peptide chain termination codons UGA and UAA. The protein is Peptide chain release factor 2 of Campylobacter concisus (strain 13826).